A 162-amino-acid polypeptide reads, in one-letter code: uncharacterized protein (162 aa).

The segment at 1 to 23 is disordered; it reads MAQLPLSPAPQRPETKTPGKPEA. The span at 13 to 23 shows a compositional bias: basic and acidic residues; that stretch reads PETKTPGKPEA.

This is an uncharacterized protein from Rhodobacter capsulatus (Rhodopseudomonas capsulata).